The sequence spans 411 residues: 3-phosphoshikimate 1-carboxyvinyltransferase (411 aa).

3-phosphoshikimate contacts are provided by Lys20, Ser21, and Arg25. Lys20 contacts phosphoenolpyruvate. Phosphoenolpyruvate-binding residues include Gly86 and Arg114. The 3-phosphoshikimate site is built by Ser156, Ser157, Gln158, Ser181, Asp295, and Lys322. Phosphoenolpyruvate is bound at residue Gln158. Asp295 (proton acceptor) is an active-site residue. Residues Arg326, Arg367, and Lys393 each coordinate phosphoenolpyruvate.

It belongs to the EPSP synthase family. Monomer.

It is found in the cytoplasm. It catalyses the reaction 3-phosphoshikimate + phosphoenolpyruvate = 5-O-(1-carboxyvinyl)-3-phosphoshikimate + phosphate. It functions in the pathway metabolic intermediate biosynthesis; chorismate biosynthesis. Catalyzes the transfer of the enolpyruvyl moiety of phosphoenolpyruvate (PEP) to the 5-hydroxyl of shikimate-3-phosphate (S3P) to produce enolpyruvyl shikimate-3-phosphate and inorganic phosphate. The chain is 3-phosphoshikimate 1-carboxyvinyltransferase from Picrophilus torridus (strain ATCC 700027 / DSM 9790 / JCM 10055 / NBRC 100828 / KAW 2/3).